Reading from the N-terminus, the 418-residue chain is Elongation factor 1-gamma 2 (418 aa).

In terms of domain architecture, GST N-terminal spans 1–82 (MALVLHAGSG…YVTRSKADNP (82 aa)). One can recognise a GST C-terminal domain in the interval 87–215 (SLIEYAHIEQ…VKQAESVPPV (129 aa)). A disordered region spans residues 210–265 (ESVPPVQKKAPPPKEQKPKEAKKEAPKEAPKPKAVEKPEEEEEAPKPKPKNPLDLL). Positions 221–246 (PPKEQKPKEAKKEAPKEAPKPKAVEK) are enriched in basic and acidic residues. The EF-1-gamma C-terminal domain occupies 258-418 (PKNPLDLLPP…ESLLDAKCFK (161 aa)).

As to quaternary structure, EF-1 is composed of four subunits: alpha, beta, delta, and gamma.

In terms of biological role, probably plays a role in anchoring the complex to other cellular components. This Oryza sativa subsp. japonica (Rice) protein is Elongation factor 1-gamma 2.